We begin with the raw amino-acid sequence, 450 residues long: Tubulin alpha-3 chain (450 aa).

Gln11 is a GTP binding site. N6-acetyllysine is present on Lys40. Residues Glu71, Ser140, Gly144, Thr145, Thr179, Asn206, and Asn228 each contribute to the GTP site. Residue Glu71 participates in Mg(2+) binding. Glu254 is an active-site residue.

This sequence belongs to the tubulin family. Dimer of alpha and beta chains. A typical microtubule is a hollow water-filled tube with an outer diameter of 25 nm and an inner diameter of 15 nM. Alpha-beta heterodimers associate head-to-tail to form protofilaments running lengthwise along the microtubule wall with the beta-tubulin subunit facing the microtubule plus end conferring a structural polarity. Microtubules usually have 13 protofilaments but different protofilament numbers can be found in some organisms and specialized cells. Mg(2+) is required as a cofactor. Post-translationally, undergoes a tyrosination/detyrosination cycle, the cyclic removal and re-addition of a C-terminal tyrosine residue by the enzymes tubulin tyrosine carboxypeptidase (TTCP) and tubulin tyrosine ligase (TTL), respectively. In terms of processing, acetylation of alpha chains at Lys-40 stabilizes microtubules and affects affinity and processivity of microtubule motors. This modification has a role in multiple cellular functions, ranging from cell motility, cell cycle progression or cell differentiation to intracellular trafficking and signaling. During the early stages of oogenesis lky/Alpha-tubulin N-acetyltransferase 2 is the main acetyltransferase responsible for Lys-40 acetylation in germline cells while Atat/alpha-tubulin N-acetyltransferase 1 is the main acetyltransferase responsible for Lys-40 acetylation in somatic cells.

The protein localises to the cytoplasm. The protein resides in the cytoskeleton. It catalyses the reaction GTP + H2O = GDP + phosphate + H(+). Functionally, tubulin is the major constituent of microtubules, a cylinder consisting of laterally associated linear protofilaments composed of alpha- and beta-tubulin heterodimers. Microtubules grow by the addition of GTP-tubulin dimers to the microtubule end, where a stabilizing cap forms. Below the cap, tubulin dimers are in GDP-bound state, owing to GTPase activity of alpha-tubulin. This is Tubulin alpha-3 chain (alphaTub84D) from Drosophila melanogaster (Fruit fly).